Consider the following 257-residue polypeptide: NAD-capped RNA hydrolase NudC (257 aa).

2 residues coordinate substrate: Lys25 and Arg69. Residues Cys98 and Cys101 each coordinate Zn(2+). Glu111 serves as a coordination point for substrate. Zn(2+)-binding residues include Cys116 and Cys119. Tyr124 is a binding site for substrate. The 124-residue stretch at 125–248 folds into the Nudix hydrolase domain; sequence PQIAPCIIVA…TVARRLIEDT (124 aa). A divalent metal cation-binding residues include Ala158, Glu174, and Glu178. The short motif at 159–180 is the Nudix box element; that stretch reads GFVEVGETLEQAVAREVMEESG. A substrate-binding site is contributed by 192–199; that stretch reads QPWPFPQS. Residue Glu219 participates in a divalent metal cation binding. Ala241 contributes to the substrate binding site.

It belongs to the Nudix hydrolase family. NudC subfamily. Homodimer. Mg(2+) serves as cofactor. It depends on Mn(2+) as a cofactor. Requires Zn(2+) as cofactor.

The catalysed reaction is a 5'-end NAD(+)-phospho-ribonucleoside in mRNA + H2O = a 5'-end phospho-adenosine-phospho-ribonucleoside in mRNA + beta-nicotinamide D-ribonucleotide + 2 H(+). It carries out the reaction NAD(+) + H2O = beta-nicotinamide D-ribonucleotide + AMP + 2 H(+). It catalyses the reaction NADH + H2O = reduced beta-nicotinamide D-ribonucleotide + AMP + 2 H(+). Its function is as follows. mRNA decapping enzyme that specifically removes the nicotinamide adenine dinucleotide (NAD) cap from a subset of mRNAs by hydrolyzing the diphosphate linkage to produce nicotinamide mononucleotide (NMN) and 5' monophosphate mRNA. The NAD-cap is present at the 5'-end of some mRNAs and stabilizes RNA against 5'-processing. Has preference for mRNAs with a 5'-end purine. Catalyzes the hydrolysis of a broad range of dinucleotide pyrophosphates. In Escherichia coli O7:K1 (strain IAI39 / ExPEC), this protein is NAD-capped RNA hydrolase NudC.